The primary structure comprises 683 residues: C-mannosyltransferase dpy-19 (683 aa).

11 helical membrane-spanning segments follow: residues 21-41, 167-187, 188-208, 220-240, 267-287, 298-318, 319-339, 344-364, 413-433, 467-487, and 502-522; these read SLYSQTWLASVVIIGLLVGYI, ITGVFIVAGTVASSIFYLGVL, VSDSIFGGFLSVLCFAFNHGE, ESFAFPFIIGHIAILTFVIKY, FAFFTQICSIFLAFSLDLIPF, IISFLIGFLLLFGNEMMITAL, YFPSILALGMIIYISPLLSNL, AYVLFLAIIFASITLGLKIGL, CGTLLIPLALISLVTFVFNFV, FLIMRLKLFMTPHLCIVAALF, and IRVSALVGVIAILFYRGIPNI.

Belongs to the dpy-19 family. Expressed faintly in neuroblasts QL and QR, more strongly in the neighboring epidermal cells (dorsal hyp7 cells, ventral P cells and lateral V cells), and in dorsal and ventral body muscle cells.

The protein resides in the endoplasmic reticulum membrane. Functionally, C-mannosyltransferase that mediates C-mannosylation of tryptophan residues on target proteins such as unc-5 and mig-21. Mediates the attachment of alpha-mannose in C-C linkage to the C2 of the indole ring of tryptophan. C-mannosylation takes place in the endoplasmic reticulum and frequently found in thrombospondin (TSP) type-1 repeats and in the WSXWS motif of type I cytokine receptors. Required to orient neuroblasts QL and QR correctly on the anterior/posterior (A/P) axis: QL and QR are born in the same A/P position, but polarize and migrate left/right asymmetrically, QL migrates toward the posterior and QR migrates toward the anterior. Required with unc-40 to express mab-5 correctly in the Q cell descendants. The protein is C-mannosyltransferase dpy-19 (dpy-19) of Caenorhabditis elegans.